Consider the following 85-residue polypeptide: MASHSAAGRRPTALVHIALFVAIAAVIINSSVCLGAAVHDAATSGTGALDPNVPAVPTPGGAGQPYTGRGCRTVYGCKPPAGSQP.

Residues 1-12 are Cytoplasmic-facing; it reads MASHSAAGRRPT. The helical transmembrane segment at 13 to 34 threads the bilayer; sequence ALVHIALFVAIAAVIINSSVCL. Topologically, residues 35–85 are extracellular; sequence GAAVHDAATSGTGALDPNVPAVPTPGGAGQPYTGRGCRTVYGCKPPAGSQP.

It localises to the membrane. In terms of biological role, associated with pathogen defense. This chain is Protein WIR1B (WIR1B), found in Triticum aestivum (Wheat).